Here is a 202-residue protein sequence, read N- to C-terminus: Translation initiation factor 2 subunit beta (202 aa).

One can recognise a TRAM domain in the interval 145 to 202 (AIEEGGTYELRIDAVGSKGDGIAKIDKYTVFVPGATKGDVVKVKIKKISGNLAFSERA).

The protein belongs to the eIF-2-beta/eIF-5 family. Heterotrimer composed of an alpha, a beta and a gamma chain.

EIF-2 functions in the early steps of protein synthesis by forming a ternary complex with GTP and initiator tRNA. The sequence is that of Translation initiation factor 2 subunit beta (eif2b) from Methanosarcina mazei (strain ATCC BAA-159 / DSM 3647 / Goe1 / Go1 / JCM 11833 / OCM 88) (Methanosarcina frisia).